The sequence spans 347 residues: MKQTIILLYGGRSAEREVSVLSAESVMRAVNYDRFTVKTFFISQSGDFIKTQEFSHAPGQEDRLMTNETIDWDKKVAPSAIYEEGAVVFPVLHGPMGEDGSVQGFLEVLKMPYVGCNILSSSLAMDKITTKRVLESAGIAQVPYVAIVEGDDVTAKIAEVEEKLAYPVFAKPSNMGSSVGISKSENQEELRQALKLAFRYDSRVLVEQGVNAREIEVGLLGNYDVKSTLPGEVVKDVAFYDYDAKYIDNKITMDIPAKISDDVVAVMRQNAETAFRAIGGLGLSRCDFFYTDKGEIFLNELNTMPGFTQWSMYPLLWDNMGISYPELIERLVDLAKESFDKREAHLI.

Residues 131-333 (KRVLESAGIA…YPELIERLVD (203 aa)) enclose the ATP-grasp domain. 161 to 216 (EEKLAYPVFAKPSNMGSSVGISKSENQEELRQALKLAFRYDSRVLVEQGVNAREIE) is an ATP binding site. The Mg(2+) site is built by Asp-287, Glu-300, and Asn-302.

Belongs to the D-alanine--D-alanine ligase family. Requires Mg(2+) as cofactor. It depends on Mn(2+) as a cofactor.

The protein localises to the cytoplasm. It carries out the reaction 2 D-alanine + ATP = D-alanyl-D-alanine + ADP + phosphate + H(+). Its pathway is cell wall biogenesis; peptidoglycan biosynthesis. In terms of biological role, cell wall formation. The protein is D-alanine--D-alanine ligase of Streptococcus pneumoniae (strain P1031).